The chain runs to 397 residues: Subtilisin-like serine protease Pen ch 13.0101 (397 aa).

A signal peptide spans 1–19 (MGFLKVLATSLATLAVVDA). Residues 20–115 (GTLLTASNTD…IEPDMIVNAT (96 aa)) constitute a propeptide, removed in mature form. Residues 35–113 (SYIVVMNDDV…KYIEPDMIVN (79 aa)) enclose the Inhibitor I9 domain. An N-linked (GlcNAc...) asparagine glycan is attached at Asn113. The region spanning 125 to 397 (SWGLARISSK…SKLLYNGINV (273 aa)) is the Peptidase S8 domain. Residues Asp157 and His188 each act as charge relay system in the active site. Asn249 and Asn284 each carry an N-linked (GlcNAc...) asparagine glycan. Ser343 (charge relay system) is an active-site residue.

The protein belongs to the peptidase S8 family.

The protein localises to the secreted. Its function is as follows. Serine protease. The protein is Subtilisin-like serine protease Pen ch 13.0101 of Penicillium rubens.